The following is a 608-amino-acid chain: Protein trichome birefringence (608 aa).

Residues 38–58 traverse the membrane as a helical; Signal-anchor for type II membrane protein segment; it reads TFAYAFVITFVSFTLFFAFSP. Polar residues-rich tracts occupy residues 101–137 and 145–203; these read STKP…QTPA and AKNT…TSPA. Residues 101–236 form a disordered region; it reads STKPTNRSSD…TPKKQTKTVD (136 aa). The span at 215-227 shows a compositional bias: low complexity; it reads TNSSSNSSTASST. Positions 328-330 match the GDS motif motif; sequence GDS. The DCXHWCLPGXXDXWN motif signature appears at 573–587; sequence DCSHWCLPGVPDSWN.

It belongs to the PC-esterase family. TBL subfamily. Expressed in leaf vasculature, growing part of the root, expanding inflorescence stems and trichomes.

Its subcellular location is the membrane. Functionally, required during cellulose deposition. May act as a bridging protein that binds pectin and other cell wall polysaccharides. Probably involved in maintaining esterification of pectins. May be involved in the specific O-acetylation of cell wall polymers. This Arabidopsis thaliana (Mouse-ear cress) protein is Protein trichome birefringence (TBR).